A 303-amino-acid polypeptide reads, in one-letter code: Dihydroorotate dehydrogenase B (NAD(+)), catalytic subunit (303 aa).

Residues Ser-21 and 45-46 contribute to the FMN site; that span reads KG. Substrate-binding positions include Lys-45 and 69 to 73; that span reads NSIGL. FMN-binding residues include Asn-99 and Asn-127. Residue Asn-127 coordinates substrate. The active-site Nucleophile is Cys-130. 2 residues coordinate FMN: Lys-165 and Ile-191. 192–193 lines the substrate pocket; sequence NT. FMN is bound by residues Gly-217, 243–244, and 265–266; these read GG and GT.

This sequence belongs to the dihydroorotate dehydrogenase family. Type 1 subfamily. In terms of assembly, heterotetramer of 2 PyrK and 2 PyrD type B subunits. It depends on FMN as a cofactor.

The protein localises to the cytoplasm. It carries out the reaction (S)-dihydroorotate + NAD(+) = orotate + NADH + H(+). The protein operates within pyrimidine metabolism; UMP biosynthesis via de novo pathway; orotate from (S)-dihydroorotate (NAD(+) route): step 1/1. Catalyzes the conversion of dihydroorotate to orotate with NAD(+) as electron acceptor. The chain is Dihydroorotate dehydrogenase B (NAD(+)), catalytic subunit (pyrD) from Thermodesulfovibrio yellowstonii (strain ATCC 51303 / DSM 11347 / YP87).